The primary structure comprises 181 residues: ATP-dependent protease subunit HslV (181 aa).

Threonine 9 is an active-site residue. Na(+) contacts are provided by serine 166, cysteine 169, and threonine 172.

This sequence belongs to the peptidase T1B family. HslV subfamily. In terms of assembly, a double ring-shaped homohexamer of HslV is capped on each side by a ring-shaped HslU homohexamer. The assembly of the HslU/HslV complex is dependent on binding of ATP.

Its subcellular location is the cytoplasm. The enzyme catalyses ATP-dependent cleavage of peptide bonds with broad specificity.. Its activity is regulated as follows. Allosterically activated by HslU binding. Protease subunit of a proteasome-like degradation complex believed to be a general protein degrading machinery. This is ATP-dependent protease subunit HslV from Staphylococcus haemolyticus (strain JCSC1435).